Reading from the N-terminus, the 104-residue chain is Phycoerythrin alpha-2 chain, chloroplastic (104 aa).

A chloroplast-targeting transit peptide spans 1-37; that stretch reads MSAKIIAFSAVVATASAFAPTAGFVPRLRSGATSVNM. Position 41 is a 5-hydroxylysine (lysine 41). Positions 56 and 58 each coordinate 15,16-dihydrobiliverdin. The 15,16-dihydrobiliverdin chromophore stretch occupies residues 61–63; that stretch reads KEY. Residue lysine 78 coordinates 15,16-dihydrobiliverdin.

Belongs to the phycoerythrin family. As to quaternary structure, heterotetramer of 2 different alpha chains and 2 identical beta chains. The subunit composition could comprise of any combination of 2 out of 4 different alpha units with an invariant beta unit. Contains one covalently linked 15,16-dihydrobiliverdin chromophore.

Its subcellular location is the plastid. It localises to the chloroplast thylakoid membrane. Functionally, light-harvesting photosynthetic tetrapyrrole chromophore-protein from the phycobiliprotein complex. The polypeptide is Phycoerythrin alpha-2 chain, chloroplastic (cpeA2) (Rhodomonas sp. (strain CS 24) (Chroomonas sp. (strain CS24))).